We begin with the raw amino-acid sequence, 357 residues long: Prostaglandin D2 receptor-like (357 aa).

The Extracellular segment spans residues methionine 1–threonine 20. Asparagine 2 carries an N-linked (GlcNAc...) asparagine glycan. Residues methionine 21 to alanine 41 traverse the membrane as a helical segment. Residues arginine 42–proline 57 are Cytoplasmic-facing. Residues serine 58–isoleucine 78 form a helical membrane-spanning segment. Topologically, residues serine 79–alanine 106 are extracellular. A glycan (N-linked (GlcNAc...) asparagine) is linked at asparagine 89. Cysteine 104 and cysteine 182 are oxidised to a cystine. A helical transmembrane segment spans residues phenylalanine 107–leucine 127. Residues glutamate 128–valine 149 are Cytoplasmic-facing. Residues leucine 150 to phenylalanine 170 form a helical membrane-spanning segment. Residues glycine 171–serine 194 lie on the Extracellular side of the membrane. A helical transmembrane segment spans residues valine 195–valine 215. Residues cysteine 216–aspartate 261 are Cytoplasmic-facing. Residues histidine 262 to tyrosine 282 traverse the membrane as a helical segment. Residues arginine 283–arginine 306 lie on the Extracellular side of the membrane. A helical transmembrane segment spans residues phenylalanine 307–phenylalanine 327. The Cytoplasmic segment spans residues arginine 328–leucine 357.

It belongs to the G-protein coupled receptor 1 family. As to expression, strongly expressed in eye and gastrointestinal tract (GIT), moderately in the brain and oviduct and weakly in the epididymis. In the eye, expressed in the epithelium of the iris and ciliary body and in photoreceptor cells of the retina. In the brain, expressed in leptomeninges, choroid plexus and spinal cord (sensory and motor neurons of the dorsal and ventral horns). In the stomach, expressed in the mucous-secreting goblet cells and the columnar epithelium. Expressed in platelets.

Its subcellular location is the cell membrane. Receptor for prostaglandin D2 (PGD2). The activity of this receptor is mainly mediated by G(s) proteins that stimulate adenylate cyclase, resulting in an elevation of intracellular cAMP. A mobilization of calcium is also observed, but without formation of inositol 1,4,5-trisphosphate. This is Prostaglandin D2 receptor-like (Ptgdrl) from Rattus norvegicus (Rat).